A 270-amino-acid polypeptide reads, in one-letter code: Putative hydro-lyase ACIAD2519 (270 aa).

It belongs to the D-glutamate cyclase family.

This Acinetobacter baylyi (strain ATCC 33305 / BD413 / ADP1) protein is Putative hydro-lyase ACIAD2519.